A 311-amino-acid chain; its full sequence is Aspartate carbamoyltransferase catalytic subunit (311 aa).

R55 and T56 together coordinate carbamoyl phosphate. Position 85 (K85) interacts with L-aspartate. Positions 106, 135, and 138 each coordinate carbamoyl phosphate. L-aspartate is bound by residues R168 and R230. L268 and P269 together coordinate carbamoyl phosphate.

Belongs to the aspartate/ornithine carbamoyltransferase superfamily. ATCase family. Heterododecamer (2C3:3R2) of six catalytic PyrB chains organized as two trimers (C3), and six regulatory PyrI chains organized as three dimers (R2).

It catalyses the reaction carbamoyl phosphate + L-aspartate = N-carbamoyl-L-aspartate + phosphate + H(+). It participates in pyrimidine metabolism; UMP biosynthesis via de novo pathway; (S)-dihydroorotate from bicarbonate: step 2/3. Catalyzes the condensation of carbamoyl phosphate and aspartate to form carbamoyl aspartate and inorganic phosphate, the committed step in the de novo pyrimidine nucleotide biosynthesis pathway. This chain is Aspartate carbamoyltransferase catalytic subunit, found in Escherichia coli (strain 55989 / EAEC).